A 390-amino-acid polypeptide reads, in one-letter code: Pyruvate dehydrogenase E1 component subunit alpha, somatic form, mitochondrial (390 aa).

A mitochondrion-targeting transit peptide spans 1–29 (MRKMLAAVSRVLAGAAQKPASRVLVASRN). The residue at position 63 (K63) is an N6-acetyllysine; alternate. An N6-succinyllysine; alternate modification is found at K63. H92, Y118, R119, A157, G165, V167, D196, G197, A198, N225, and Y227 together coordinate pyruvate. Residues Y118 and R119 each contribute to the thiamine diphosphate site. Thiamine diphosphate-binding residues include G165, V167, D196, G197, A198, and N225. D196 serves as a coordination point for Mg(2+). 2 residues coordinate Mg(2+): N225 and Y227. Phosphoserine; by PDK1 is present on S232. The residue at position 244 (K244) is an N6-acetyllysine; alternate. Residue K244 is modified to N6-succinyllysine; alternate. The residue at position 267 (K267) is an N6-acetyllysine. An N6-succinyllysine modification is found at K277. H292 contributes to the thiamine diphosphate binding site. Residue S293 is modified to Phosphoserine; by PDK1, PDK2, PDK3 and PDK4. S295 carries the phosphoserine modification. The residue at position 300 (S300) is a Phosphoserine; by PDK1, PDK2, PDK3 and PDK4. Y301 is modified (phosphotyrosine). An N6-acetyllysine; alternate modification is found at K313. Position 313 is an N6-succinyllysine; alternate (K313). N6-acetyllysine is present on residues K321 and K336. An N6-succinyllysine modification is found at K385.

In terms of assembly, heterotetramer of two PDHA1 and two PDHB subunits. The heterotetramer interacts with DLAT, and is part of the multimeric pyruvate dehydrogenase complex that contains multiple copies of pyruvate dehydrogenase (E1), dihydrolipoamide acetyltransferase (DLAT, E2) and lipoamide dehydrogenase (DLD, E3). These subunits are bound to an inner core composed of about 48 DLAT and 12 PDHX molecules. Thiamine diphosphate is required as a cofactor. Requires Mg(2+) as cofactor. In terms of processing, phosphorylation at Ser-232, Ser-293 and Ser-300 by PDK family kinases inactivates the enzyme; for this phosphorylation at a single site is sufficient. Phosphorylation at Ser-293 interferes with access to active site, and thereby inactivates the enzyme. Dephosphorylation at all three sites, i.e. at Ser-232, Ser-293 and Ser-300, is required for reactivation. Acetylation alters the phosphorylation pattern. Deacetylated by SIRT3. In terms of tissue distribution, in all tissues, but in very low amount in testis.

It localises to the mitochondrion matrix. The catalysed reaction is N(6)-[(R)-lipoyl]-L-lysyl-[protein] + pyruvate + H(+) = N(6)-[(R)-S(8)-acetyldihydrolipoyl]-L-lysyl-[protein] + CO2. With respect to regulation, pyruvate dehydrogenase activity is inhibited by phosphorylation of PDHA1; it is reactivated by dephosphorylation. In terms of biological role, the pyruvate dehydrogenase complex catalyzes the overall conversion of pyruvate to acetyl-CoA and CO(2), and thereby links the glycolytic pathway to the tricarboxylic cycle. This Rattus norvegicus (Rat) protein is Pyruvate dehydrogenase E1 component subunit alpha, somatic form, mitochondrial (Pdha1).